Here is a 961-residue protein sequence, read N- to C-terminus: Thrombospondin-4 (961 aa).

A signal peptide spans 1 to 23 (MLAPRGATFLLLHLALQPWLGAG). In terms of domain architecture, Laminin G-like spans 24–192 (AQATPQVFDL…LEELKLVVRG (169 aa)). An EGF-like 1 domain is found at 286-325 (PVRRCDSNPCFRGVRCTDTRDGFQCGPCPEGYTGNGIVCS). Cystine bridges form between Cys-290–Cys-301, Cys-295–Cys-310, Cys-313–Cys-324, Cys-330–Cys-341, Cys-335–Cys-350, Cys-353–Cys-377, Cys-383–Cys-394, Cys-388–Cys-403, Cys-406–Cys-418, Cys-424–Cys-438, Cys-432–Cys-448, Cys-450–Cys-461, Cys-477–Cys-482, Cys-487–Cys-507, Cys-523–Cys-543, Cys-546–Cys-566, Cys-582–Cys-602, Cys-605–Cys-625, Cys-643–Cys-663, Cys-683–Cys-703, and Cys-719–Cys-940. Positions 326 to 363 (DVDECRYHPCYPGVRCVNLAPGFRCDACPVGFTGPMMQ) constitute an EGF-like 2; calcium-binding domain. An EGF-like 3; calcium-binding domain is found at 379–419 (DIDECRNGACVLNSICINTLGSYRCGPCKPGYIGDQMRGCK). The region spanning 420–462 (MERNCRDPELNPCSVNAQCIEERQGDVTCVCGVGWAGDGYICG) is the EGF-like 4 domain. 8 TSP type-3 repeats span residues 463–495 (KDVD…NSGQ), 496–531 (EDAD…NVDQ), 532–554 (RNSD…NNDQ), 555–590 (KDTD…NSDQ), 591–613 (EDRD…NPNQ), 614–651 (SDVD…NSAQ), 652–691 (LDTD…NPAQ), and 692–727 (EDSN…EVTL). The short motif at 562–564 (KGD) is the Cell attachment site element. Residues 581–671 (NCQKVPNSDQ…ECDDDDDNDG (91 aa)) are disordered. N-linked (GlcNAc...) asparagine glycosylation is present at Asn-612. Positions 640–652 (TDNCPTVINSAQL) are enriched in polar residues. Positions 660-671 (GDECDDDDDNDG) are enriched in acidic residues. The TSP C-terminal domain occupies 731–945 (RAYQTVVLDP…LKYRCNDTIP (215 aa)). Asn-941 is a glycosylation site (N-linked (GlcNAc...) asparagine).

The protein belongs to the thrombospondin family. Homopentamer; disulfide-linked. Interacts with PTBP3. Interacts (via EGF-like 3; calcium-binding domain) with ATF6 and facilitates its processing, activation and nuclear translocation. Interacts with NOTCH1.

Its subcellular location is the endoplasmic reticulum. It localises to the sarcoplasmic reticulum. The protein resides in the secreted. It is found in the extracellular space. The protein localises to the extracellular matrix. Functionally, adhesive glycoprotein that mediates cell-to-cell and cell-to-matrix interactions and is involved in various processes including cellular proliferation, migration, adhesion and attachment, inflammatory response to CNS injury, regulation of vascular inflammation and adaptive responses of the heart to pressure overload and in myocardial function and remodeling. Binds to structural extracellular matrix (ECM) proteins and modulates the ECM in response to tissue damage, contributing to cardioprotective and adaptive ECM remodeling. Plays a role in ER stress response, via its interaction with the activating transcription factor 6 alpha (ATF6) which produces adaptive ER stress response factors and protects myocardium from pressure overload. May contribute to spinal presynaptic hypersensitivity and neuropathic pain states after peripheral nerve injury. May play a role in regulating protective astrogenesis from the subventricular zone (SVZ) niche after injury in a NOTCH1-dependent manner. This chain is Thrombospondin-4 (THBS4), found in Bos taurus (Bovine).